Here is a 157-residue protein sequence, read N- to C-terminus: Transcription elongation factor GreA (157 aa).

Residues 47-75 (SGEYEDAKKAQALLEGRIRELKHLLSRAE) are a coiled coil.

Belongs to the GreA/GreB family.

Its function is as follows. Necessary for efficient RNA polymerase transcription elongation past template-encoded arresting sites. The arresting sites in DNA have the property of trapping a certain fraction of elongating RNA polymerases that pass through, resulting in locked ternary complexes. Cleavage of the nascent transcript by cleavage factors such as GreA or GreB allows the resumption of elongation from the new 3'terminus. GreA releases sequences of 2 to 3 nucleotides. This chain is Transcription elongation factor GreA, found in Chloroflexus aggregans (strain MD-66 / DSM 9485).